The sequence spans 599 residues: Sulfite reductase [NADPH] flavoprotein alpha-component (599 aa).

One can recognise a Flavodoxin-like domain in the interval 64–202 (ITIISASQTG…AASEWRARVV (139 aa)). FMN contacts are provided by residues 70–75 (SQTGNA), 117–120 (STQG), and 153–162 (LGDSSYEFFC). Residues 234-448 (DSPLVASLSV…IEHNDNFRLP (215 aa)) enclose the FAD-binding FR-type domain. FAD is bound by residues Thr-322, Ala-356, 386–389 (RLYS), 404–406 (TVG), Tyr-410, and 419–422 (GGAS). Residues 519 to 520 (SR), 525 to 529 (KVYVQ), and Asp-561 contribute to the NADP(+) site. FAD is bound at residue Tyr-599.

Belongs to the NADPH-dependent sulphite reductase flavoprotein subunit CysJ family. This sequence in the N-terminal section; belongs to the flavodoxin family. It in the C-terminal section; belongs to the flavoprotein pyridine nucleotide cytochrome reductase family. Alpha(8)-beta(8). The alpha component is a flavoprotein, the beta component is a hemoprotein. Requires FAD as cofactor. It depends on FMN as a cofactor.

The catalysed reaction is hydrogen sulfide + 3 NADP(+) + 3 H2O = sulfite + 3 NADPH + 4 H(+). It functions in the pathway sulfur metabolism; hydrogen sulfide biosynthesis; hydrogen sulfide from sulfite (NADPH route): step 1/1. Its function is as follows. Component of the sulfite reductase complex that catalyzes the 6-electron reduction of sulfite to sulfide. This is one of several activities required for the biosynthesis of L-cysteine from sulfate. The flavoprotein component catalyzes the electron flow from NADPH -&gt; FAD -&gt; FMN to the hemoprotein component. This Escherichia coli O9:H4 (strain HS) protein is Sulfite reductase [NADPH] flavoprotein alpha-component.